The primary structure comprises 241 residues: MTTANSASRPNINVDQAELDKFSALAARWWDPESEFKPLHAINPLRLEWIQELAGSLQGRRVLDVGCGGGILSEAMAQAGADVTGIDLAEKSLKIARLHGLESGVKVEYRAVPVEELATEQAGQYDIVTCMEMLEHVPDPNSVVRACAALVKPGGWVFFSTLNRNPKSFLFAIIGAEYVLRLLPRGTHSYEHFIKPSELAASARQAGLEPSGMRGMEYNPITQIYSLSGNTSVNYLMATRK.

4 residues coordinate S-adenosyl-L-methionine: R46, G66, D87, and M131.

It belongs to the methyltransferase superfamily. UbiG/COQ3 family.

It carries out the reaction a 3-demethylubiquinol + S-adenosyl-L-methionine = a ubiquinol + S-adenosyl-L-homocysteine + H(+). It catalyses the reaction a 3-(all-trans-polyprenyl)benzene-1,2-diol + S-adenosyl-L-methionine = a 2-methoxy-6-(all-trans-polyprenyl)phenol + S-adenosyl-L-homocysteine + H(+). It participates in cofactor biosynthesis; ubiquinone biosynthesis. O-methyltransferase that catalyzes the 2 O-methylation steps in the ubiquinone biosynthetic pathway. This is Ubiquinone biosynthesis O-methyltransferase from Bordetella avium (strain 197N).